The following is a 153-amino-acid chain: Endoribonuclease YbeY (153 aa).

Zn(2+)-binding residues include His-114, His-118, and His-124.

Belongs to the endoribonuclease YbeY family. Requires Zn(2+) as cofactor.

It localises to the cytoplasm. Its function is as follows. Single strand-specific metallo-endoribonuclease involved in late-stage 70S ribosome quality control and in maturation of the 3' terminus of the 16S rRNA. In Nitrosococcus oceani (strain ATCC 19707 / BCRC 17464 / JCM 30415 / NCIMB 11848 / C-107), this protein is Endoribonuclease YbeY.